A 275-amino-acid chain; its full sequence is Glycerol-3-phosphate dehydrogenase [NAD(P)+] (275 aa).

The NADPH site is built by Trp-12, Arg-32, and Lys-105. Positions 105, 133, and 135 each coordinate sn-glycerol 3-phosphate. Ala-137 provides a ligand contact to NADPH. Sn-glycerol 3-phosphate-binding residues include Lys-188, Asp-241, Ser-251, Arg-252, and Asn-253. The active-site Proton acceptor is the Lys-188. NADPH is bound at residue Arg-252.

This sequence belongs to the NAD-dependent glycerol-3-phosphate dehydrogenase family.

Its subcellular location is the cytoplasm. It carries out the reaction sn-glycerol 3-phosphate + NAD(+) = dihydroxyacetone phosphate + NADH + H(+). The enzyme catalyses sn-glycerol 3-phosphate + NADP(+) = dihydroxyacetone phosphate + NADPH + H(+). It participates in membrane lipid metabolism; glycerophospholipid metabolism. In terms of biological role, catalyzes the reduction of the glycolytic intermediate dihydroxyacetone phosphate (DHAP) to sn-glycerol 3-phosphate (G3P), the key precursor for phospholipid synthesis. This chain is Glycerol-3-phosphate dehydrogenase [NAD(P)+], found in Paramagnetospirillum magneticum (strain ATCC 700264 / AMB-1) (Magnetospirillum magneticum).